Here is a 229-residue protein sequence, read N- to C-terminus: 7-cyano-7-deazaguanine synthase (229 aa).

15–25 (LSGGLDSATVV) is an ATP binding site. Zn(2+) is bound by residues Cys-194, Cys-204, Cys-207, and Cys-210.

It belongs to the QueC family. Zn(2+) is required as a cofactor.

The enzyme catalyses 7-carboxy-7-deazaguanine + NH4(+) + ATP = 7-cyano-7-deazaguanine + ADP + phosphate + H2O + H(+). It participates in purine metabolism; 7-cyano-7-deazaguanine biosynthesis. Functionally, catalyzes the ATP-dependent conversion of 7-carboxy-7-deazaguanine (CDG) to 7-cyano-7-deazaguanine (preQ(0)). In Pseudomonas savastanoi pv. phaseolicola (strain 1448A / Race 6) (Pseudomonas syringae pv. phaseolicola (strain 1448A / Race 6)), this protein is 7-cyano-7-deazaguanine synthase.